Consider the following 440-residue polypeptide: C4-dicarboxylate transport protein (440 aa).

The next 8 membrane-spanning stretches (helical) occupy residues 8–28, 40–60, 74–94, 147–167, 187–207, 221–241, 288–308, and 354–374; these read LYLQ…LFPA, FIKL…VTGI, LKGL…GLVV, GDIL…AALK, IVGF…AFTV, LIAC…GLVL, VVGL…SIYL, and AATL…LLGV. Residues 419 to 440 form a disordered region; sequence EEVEPANEPEPPAVPAGAGLHG.

Belongs to the dicarboxylate/amino acid:cation symporter (DAACS) (TC 2.A.23) family.

The protein resides in the cell inner membrane. Responsible for the transport of dicarboxylates such as succinate, fumarate, and malate from the periplasm across the membrane. The polypeptide is C4-dicarboxylate transport protein (Anaeromyxobacter dehalogenans (strain 2CP-1 / ATCC BAA-258)).